A 742-amino-acid polypeptide reads, in one-letter code: Phosphoribosylformylglycinamidine synthase subunit PurL (742 aa).

H54 is a catalytic residue. Residues Y57 and K96 each coordinate ATP. Residue E98 participates in Mg(2+) binding. Substrate-binding positions include 99-102 (SHNH) and R121. Residue H100 is the Proton acceptor of the active site. D122 lines the Mg(2+) pocket. Residue Q245 participates in substrate binding. A Mg(2+)-binding site is contributed by D273. Residue 317–319 (ESQ) coordinates substrate. The ATP site is built by D500 and G537. A Mg(2+)-binding site is contributed by N538. Residue S540 participates in substrate binding.

Belongs to the FGAMS family. In terms of assembly, monomer. Part of the FGAM synthase complex composed of 1 PurL, 1 PurQ and 2 PurS subunits.

Its subcellular location is the cytoplasm. It carries out the reaction N(2)-formyl-N(1)-(5-phospho-beta-D-ribosyl)glycinamide + L-glutamine + ATP + H2O = 2-formamido-N(1)-(5-O-phospho-beta-D-ribosyl)acetamidine + L-glutamate + ADP + phosphate + H(+). Its pathway is purine metabolism; IMP biosynthesis via de novo pathway; 5-amino-1-(5-phospho-D-ribosyl)imidazole from N(2)-formyl-N(1)-(5-phospho-D-ribosyl)glycinamide: step 1/2. Its function is as follows. Part of the phosphoribosylformylglycinamidine synthase complex involved in the purines biosynthetic pathway. Catalyzes the ATP-dependent conversion of formylglycinamide ribonucleotide (FGAR) and glutamine to yield formylglycinamidine ribonucleotide (FGAM) and glutamate. The FGAM synthase complex is composed of three subunits. PurQ produces an ammonia molecule by converting glutamine to glutamate. PurL transfers the ammonia molecule to FGAR to form FGAM in an ATP-dependent manner. PurS interacts with PurQ and PurL and is thought to assist in the transfer of the ammonia molecule from PurQ to PurL. The protein is Phosphoribosylformylglycinamidine synthase subunit PurL of Bacillus velezensis (strain DSM 23117 / BGSC 10A6 / LMG 26770 / FZB42) (Bacillus amyloliquefaciens subsp. plantarum).